Reading from the N-terminus, the 106-residue chain is Large ribosomal subunit protein bL21 (106 aa).

This sequence belongs to the bacterial ribosomal protein bL21 family. In terms of assembly, part of the 50S ribosomal subunit. Contacts protein L20.

In terms of biological role, this protein binds to 23S rRNA in the presence of protein L20. This is Large ribosomal subunit protein bL21 from Fervidobacterium nodosum (strain ATCC 35602 / DSM 5306 / Rt17-B1).